Reading from the N-terminus, the 670-residue chain is G-protein coupled receptor moody (670 aa).

Topologically, residues 1 to 40 are extracellular; the sequence is MSDETTISLEDGYPPLEALTTMVPPADATGFSQSLLTFAA. The chain crosses the membrane as a helical span at residues 41 to 61; sequence VMTFLIMIVGICGNLLTVVAL. Topologically, residues 62–69 are cytoplasmic; that stretch reads LKCPKVRN. The helical transmembrane segment at 70 to 90 threads the bilayer; the sequence is VAAAFIISLCIADLLFCALVL. The Extracellular portion of the chain corresponds to 91–111; it reads PFQGLRFVQGTWRHGQVLCRL. Cysteines 109 and 188 form a disulfide. The helical transmembrane segment at 112–132 threads the bilayer; that stretch reads IPFIQYGNIGVSLLCIAMITI. The Cytoplasmic segment spans residues 133–152; that stretch reads NRYVMITHHGLYARIYKRHW. Residues 153-173 form a helical membrane-spanning segment; it reads IAVMIAACWLFSYGMQLPTLL. The Extracellular portion of the chain corresponds to 174 to 202; the sequence is GEWGRFGYDSRLQTCSIMTDDHGHSSKTT. A helical membrane pass occupies residues 203 to 223; it reads LFITAFVIPCLVIIACYAKIF. The Cytoplasmic portion of the chain corresponds to 224–313; that stretch reads WVVHKSEQRL…AKRNEWRITK (90 aa). A disordered region spans residues 258–302; the sequence is LPSGAECQPSNRVSSDSSSSFSIDVPETAPSGKQQPTRVKDQREV. Positions 267–279 are enriched in low complexity; the sequence is SNRVSSDSSSSFS. Residues 314 to 334 traverse the membrane as a helical segment; sequence MVLAIFLSFVVCYLPITIVKV. Topologically, residues 335–345 are extracellular; the sequence is ADKNVEHPSLH. A helical membrane pass occupies residues 346–366; sequence ICSYILLYLSACINPIIYVIM. At 367–670 the chain is on the cytoplasmic side; sequence NKQYRKAYKT…LTAKMKFPKD (304 aa). Disordered regions lie at residues 461–490, 562–622, and 636–670; these read DLIS…GSNS, ELPP…YMNV, and TNAV…FPKD. Residues 564–584 are compositionally biased toward pro residues; sequence PPTPPATSAPTTPAPPPPSSP. The segment covering 585-598 has biased composition (low complexity); that stretch reads LHPLSTDSSTTTIS. The span at 646-660 shows a compositional bias: polar residues; it reads GPANTSATVSISGSK.

This sequence belongs to the G-protein coupled receptor 1 family. As to expression, isoform A and isoform B are expressed in the head. Isoform B only is expressed in the body. Expressed in embryonic glial cells that are involved in ensheathment and insulation of the nervous system. Both isoforms are expressed in glia that insulate the larval and adult nervous system. Also expressed in the germ cells, the gut, and the heart.

It localises to the cell membrane. In terms of biological role, isoform A and isoform B are required in glia to regulate the acute sensitivity to cocaine and to continuously maintain the proper blood-brain barrier (BBB) function. A moody-mediated signaling pathway functions in glia to regulate nervous system insulation and drug-related behaviors. Galphai and Galphao, and the regulator of G protein signaling, loco, are required in the surface glia to achieve effective insulation. The components function by regulating the cortical actin and thereby stabilizing the extended morphology of the surface glia, which in turn is necessary for the formation of septate junctions of sufficient length to achieve proper sealing of the nerve cord. This chain is G-protein coupled receptor moody, found in Drosophila melanogaster (Fruit fly).